A 249-amino-acid polypeptide reads, in one-letter code: Triosephosphate isomerase (249 aa).

9-11 provides a ligand contact to substrate; the sequence is NWK. His94 functions as the Electrophile in the catalytic mechanism. The active-site Proton acceptor is the Glu166. Residues Gly172, Ser214, and 235-236 contribute to the substrate site; that span reads GG.

It belongs to the triosephosphate isomerase family. As to quaternary structure, homodimer.

Its subcellular location is the cytoplasm. It catalyses the reaction D-glyceraldehyde 3-phosphate = dihydroxyacetone phosphate. It participates in carbohydrate biosynthesis; gluconeogenesis. It functions in the pathway carbohydrate degradation; glycolysis; D-glyceraldehyde 3-phosphate from glycerone phosphate: step 1/1. Involved in the gluconeogenesis. Catalyzes stereospecifically the conversion of dihydroxyacetone phosphate (DHAP) to D-glyceraldehyde-3-phosphate (G3P). The chain is Triosephosphate isomerase from Leptospira biflexa serovar Patoc (strain Patoc 1 / Ames).